A 395-amino-acid chain; its full sequence is Chorismate synthase (395 aa).

NADP(+) is bound by residues Arg40 and Arg46. FMN is bound by residues 135–137 (RAS) and 256–257 (QA). Over residues 272–283 (RRGSQAHDEMRP) the composition is skewed to basic and acidic residues. The tract at residues 272–296 (RRGSQAHDEMRPGPDGILRSTNRAG) is disordered. FMN contacts are provided by residues Gly300, 315-319 (KPIST), and Arg341.

This sequence belongs to the chorismate synthase family. Homotetramer. FMNH2 serves as cofactor.

The enzyme catalyses 5-O-(1-carboxyvinyl)-3-phosphoshikimate = chorismate + phosphate. It participates in metabolic intermediate biosynthesis; chorismate biosynthesis; chorismate from D-erythrose 4-phosphate and phosphoenolpyruvate: step 7/7. Functionally, catalyzes the anti-1,4-elimination of the C-3 phosphate and the C-6 proR hydrogen from 5-enolpyruvylshikimate-3-phosphate (EPSP) to yield chorismate, which is the branch point compound that serves as the starting substrate for the three terminal pathways of aromatic amino acid biosynthesis. This reaction introduces a second double bond into the aromatic ring system. This Rhodococcus jostii (strain RHA1) protein is Chorismate synthase.